Consider the following 575-residue polypeptide: Bifunctional decalin synthase calF (575 aa).

An N-terminal signal peptide occupies residues 1 to 18 (MSFKPLLLSLSLLSPALG). 9 N-linked (GlcNAc...) asparagine glycosylation sites follow: N46, N103, N127, N175, N268, N308, N359, N425, and N485. The region spanning 118-297 (LGNYASYSIN…LSMTTKVFQD (180 aa)) is the FAD-binding PCMH-type domain.

It belongs to the oxygen-dependent FAD-linked oxidoreductase family.

The protein operates within secondary metabolite biosynthesis. In terms of biological role, bifunctional decaline synthase; part of the gene cluster that mediates the biosynthesis of calbistrin A and related compounds. Calbistrin A is a secondary metabolite with an interesting structure that was recently found to have bioactivity against leukemia cells. It consists of two polyketides linked by an ester bond: a bicyclic decalin containing polyketide and a linear 12 carbon dioic acid structure. The polyketide synthase calA is probably responsible for forming the decalin moiety. Because calA lacks a designated enoylreductase (ER) domain, the required activity is provided by the trans-enoyl reductase calK. Following release from the PKS, calF then probably catalyzes the oxidation and the subsequent Diels Alder cycloisomerization that lead to the formation of the decalin moiety. The decalin polyketide backbone includes two C-methyl groups, at C7 and C11 in backbone, of which the C7 position is probably methylated by the methyltransferase domain of calA. A candidate for adding the methyl group at C11, if not done by CalA, is the cluster methyltransferase calH. Several additional tailoring enzymes within the cluster could be involved in the modification of the decalin polyketide product. Those include the 3 cytochrome P450 monooxygenases CalE, CalG and CalL, of which one might be responsible for the introduction of the extra hydroxyl group attached to the backbone of the decalin moiety, at position C9 in the backbone, that allows for attachment of the linear moiety. One tailoring enzyme activity that is expected to be involved in biosynthesis of calbistrin is an acyltransferase for connecting the two polyketide synthase products, and which could be performed by the cluster acyltransferase calJ. The enzyme responsible for the biosynthesis of the linear moiety, probably a second PKS, has not been identified yet. The polypeptide is Bifunctional decalin synthase calF (Penicillium decumbens).